Here is a 162-residue protein sequence, read N- to C-terminus: UPF0305 protein MMP0665 (162 aa).

This sequence belongs to the UPF0305 family.

The sequence is that of UPF0305 protein MMP0665 from Methanococcus maripaludis (strain DSM 14266 / JCM 13030 / NBRC 101832 / S2 / LL).